The chain runs to 332 residues: RNA polymerase II holoenzyme cyclin-like subunit (332 aa).

Residues 74-175 (RIYCYFLIMK…LIEELQSYMI (102 aa)) form the Cyclin N-terminal domain.

This sequence belongs to the cyclin family. Cyclin C subfamily. Component of the SRB8-11 complex, a regulatory module of the Mediator complex.

The protein resides in the nucleus. Functionally, component of the SRB8-11 complex. The SRB8-11 complex is a regulatory module of the Mediator complex which is itself involved in regulation of basal and activated RNA polymerase II-dependent transcription. The SRB8-11 complex may be involved in the transcriptional repression of a subset of genes regulated by Mediator. It may inhibit the association of the Mediator complex with RNA polymerase II to form the holoenzyme complex. The SRB8-11 complex phosphorylates the C-terminal domain (CTD) of the largest subunit of RNA polymerase II. This Eremothecium gossypii (strain ATCC 10895 / CBS 109.51 / FGSC 9923 / NRRL Y-1056) (Yeast) protein is RNA polymerase II holoenzyme cyclin-like subunit (SSN8).